A 414-amino-acid polypeptide reads, in one-letter code: uncharacterized protein (414 aa).

A helical transmembrane segment spans residues Thr-367–Val-384.

The protein resides in the virion membrane. This is an uncharacterized protein from Human cytomegalovirus (strain Merlin) (HHV-5).